A 470-amino-acid chain; its full sequence is Chromosomal replication initiator protein DnaA (470 aa).

The interval 1–79 is domain I, interacts with DnaA modulators; that stretch reads MTDDTWGLLR…AVQRLAFKVA (79 aa). Residues 79-128 are domain II; the sequence is AANSPTRPVQPTMSEAIEEPAPLQTTVVDQLGNQEGNTSVKSPPEDLQAA. Residues 129–350 are domain III, AAA+ region; the sequence is PLDPRFTFDS…GALTRLFAFA (222 aa). Gly-173, Gly-175, Lys-176, and Thr-177 together coordinate ATP. The tract at residues 351-470 is domain IV, binds dsDNA; the sequence is SLVGREIDMD…VEMLRRSLEA (120 aa).

It belongs to the DnaA family. Oligomerizes as a right-handed, spiral filament on DNA at oriC.

The protein localises to the cytoplasm. In terms of biological role, plays an essential role in the initiation and regulation of chromosomal replication. ATP-DnaA binds to the origin of replication (oriC) to initiate formation of the DNA replication initiation complex once per cell cycle. Binds the DnaA box (a 9 base pair repeat at the origin) and separates the double-stranded (ds)DNA. Forms a right-handed helical filament on oriC DNA; dsDNA binds to the exterior of the filament while single-stranded (ss)DNA is stabiized in the filament's interior. The ATP-DnaA-oriC complex binds and stabilizes one strand of the AT-rich DNA unwinding element (DUE), permitting loading of DNA polymerase. After initiation quickly degrades to an ADP-DnaA complex that is not apt for DNA replication. Binds acidic phospholipids. In Ruegeria sp. (strain TM1040) (Silicibacter sp.), this protein is Chromosomal replication initiator protein DnaA.